A 383-amino-acid polypeptide reads, in one-letter code: tRNA-specific 2-thiouridylase MnmA (383 aa).

Residues 30–37 (GMSGGVDS) and M56 each bind ATP. Residues 116-118 (NPD) are interaction with target base in tRNA. C121 functions as the Nucleophile in the catalytic mechanism. A disulfide bond links C121 and C218. G146 lines the ATP pocket. The interaction with tRNA stretch occupies residues 168–170 (KDQ). The active-site Cysteine persulfide intermediate is the C218. The tract at residues 330–331 (RY) is interaction with tRNA.

This sequence belongs to the MnmA/TRMU family.

It is found in the cytoplasm. The catalysed reaction is S-sulfanyl-L-cysteinyl-[protein] + uridine(34) in tRNA + AH2 + ATP = 2-thiouridine(34) in tRNA + L-cysteinyl-[protein] + A + AMP + diphosphate + H(+). Functionally, catalyzes the 2-thiolation of uridine at the wobble position (U34) of tRNA, leading to the formation of s(2)U34. This chain is tRNA-specific 2-thiouridylase MnmA, found in Haemophilus influenzae (strain ATCC 51907 / DSM 11121 / KW20 / Rd).